The primary structure comprises 204 residues: MNLTMQLAVIVAVCLCLAEGAPDVRLTRTKQQRPTRGFKNVEMMTARGFGKRDRPHPRAERDVDHQAPSARPNRGTPTFKSPTVGIARDFGKRASQYGNEEEIRVTRGTFKPNSNILIARGYGKRTQLPQIDGVYGLDNFWEMLETSPEREVQEVDEKTLESIPLDWFVNEMLNNPDFARSVVRKFIDLNQDGMLSSEELLRNF.

The signal sequence occupies residues 1 to 20; that stretch reads MNLTMQLAVIVAVCLCLAEG. A propeptide spanning residues 21 to 35 is cleaved from the precursor; it reads APDVRLTRTKQQRPT. The tract at residues 47-83 is disordered; that stretch reads RGFGKRDRPHPRAERDVDHQAPSARPNRGTPTFKSPT. F49 is subject to Phenylalanine amide. Residues 50–65 are compositionally biased toward basic and acidic residues; the sequence is GKRDRPHPRAERDVDH. Residues 53 to 204 constitute a propeptide that is removed on maturation; sequence DRPHPRAERD…LSSEELLRNF (152 aa).

As to expression, expressed extensively in the brain, frontal ganglion and terminal ganglion of the day 2 fifth instar larva (at protein level). Not expressed in the larval brain after day 4 of the fifth instar, or in the brain of the pupa or adult. Expression in the terminal ganglion is localized to cells in the posterior portion of the seventh neuromere of day 2 fifth instar larvae. In the pupa and adult expression is detected in the medial region of neuromere 6, the dorsal medial region of neuromere 7, and the posterior neuromere of the terminal ganglion (at protein level). In the frontal ganglion expression decreases in the wandering larvae and is present at low levels in during pupal ecdysis, but is not detected in the adult. Expressed in the subesophageal ganglion of day 2 fifth instar larva, but not at any time before or after day 2. Not expressed in the abdominal ganglia 1-6 of the day 2 fifth instar larva (at protein level). Expressed in the anterior neuromeres of the pterothoracic ganglion in pupa but not in adult (at protein level). Expressed in the unfused abdominal ganglia of day 10 pupae, and in pharate adult is expressed in median neurosecretory cells M1, M2 and M5, but not in median neurosecretory cells M3 and M4 (at protein level). Not expressed in the differentiated median neurosecretory cells M5 of the larva (at protein level). In the pharate adult brain isoform 3 is the predominant form, with lower levels of isoform 2 and very low levels of isoform 1 detected. In the pharate adult nerve cord isoform 3 is the predominant form, with lower levels of isoform 2 and no isoform 1 detected. In the pharate adult frontal ganglion isoform 3 is expressed, but not isoform 1 and isoform 2.

It localises to the secreted. In terms of biological role, neuropeptide stimulator of juvenile hormone synthesis. Cardioregulatory neurohormone that increases heart beat rate in the adult but not in the larva. Inhibits active ion transport in the midgut of feeding fourth instar and day 2 fifth instar larva, but not in the midgut of pharate or wandering fifth instar larva. The sequence is that of Allatotropin from Manduca sexta (Tobacco hawkmoth).